Here is a 561-residue protein sequence, read N- to C-terminus: Oxygen-dependent choline dehydrogenase (561 aa).

7–36 (DYIIVGAGSAGNVLASRLAEDADVTVLLLE) contacts FAD. His-474 acts as the Proton acceptor in catalysis.

It belongs to the GMC oxidoreductase family. Requires FAD as cofactor.

The enzyme catalyses choline + A = betaine aldehyde + AH2. It catalyses the reaction betaine aldehyde + NAD(+) + H2O = glycine betaine + NADH + 2 H(+). It functions in the pathway amine and polyamine biosynthesis; betaine biosynthesis via choline pathway; betaine aldehyde from choline (cytochrome c reductase route): step 1/1. Its function is as follows. Involved in the biosynthesis of the osmoprotectant glycine betaine. Catalyzes the oxidation of choline to betaine aldehyde and betaine aldehyde to glycine betaine at the same rate. This is Oxygen-dependent choline dehydrogenase from Paraburkholderia xenovorans (strain LB400).